We begin with the raw amino-acid sequence, 262 residues long: Acyl-[acyl-carrier-protein]--UDP-N-acetylglucosamine O-acyltransferase (262 aa).

The protein belongs to the transferase hexapeptide repeat family. LpxA subfamily. As to quaternary structure, homotrimer.

It is found in the cytoplasm. It catalyses the reaction a (3R)-hydroxyacyl-[ACP] + UDP-N-acetyl-alpha-D-glucosamine = a UDP-3-O-[(3R)-3-hydroxyacyl]-N-acetyl-alpha-D-glucosamine + holo-[ACP]. It functions in the pathway glycolipid biosynthesis; lipid IV(A) biosynthesis; lipid IV(A) from (3R)-3-hydroxytetradecanoyl-[acyl-carrier-protein] and UDP-N-acetyl-alpha-D-glucosamine: step 1/6. Functionally, involved in the biosynthesis of lipid A, a phosphorylated glycolipid that anchors the lipopolysaccharide to the outer membrane of the cell. The protein is Acyl-[acyl-carrier-protein]--UDP-N-acetylglucosamine O-acyltransferase of Burkholderia ambifaria (strain MC40-6).